Here is a 383-residue protein sequence, read N- to C-terminus: S-adenosylmethionine synthase (383 aa).

H15 contacts ATP. D17 serves as a coordination point for Mg(2+). E43 contacts K(+). E56 and Q99 together coordinate L-methionine. The segment at 99-109 is flexible loop; sequence QSPDINQGVDR. Residues 164–166, 230–231, D239, 245–246, A262, and K266 contribute to the ATP site; these read DAK, RF, and RK. D239 is an L-methionine binding site. Residue K270 coordinates L-methionine.

It belongs to the AdoMet synthase family. As to quaternary structure, homotetramer; dimer of dimers. Mg(2+) is required as a cofactor. K(+) serves as cofactor.

The protein localises to the cytoplasm. The catalysed reaction is L-methionine + ATP + H2O = S-adenosyl-L-methionine + phosphate + diphosphate. The protein operates within amino-acid biosynthesis; S-adenosyl-L-methionine biosynthesis; S-adenosyl-L-methionine from L-methionine: step 1/1. Catalyzes the formation of S-adenosylmethionine (AdoMet) from methionine and ATP. The overall synthetic reaction is composed of two sequential steps, AdoMet formation and the subsequent tripolyphosphate hydrolysis which occurs prior to release of AdoMet from the enzyme. The chain is S-adenosylmethionine synthase from Shewanella baltica (strain OS155 / ATCC BAA-1091).